Here is a 206-residue protein sequence, read N- to C-terminus: MATTIKLEGEARSEFGKGVARRLRVANKIPATIYAGGEEPAFVTLPMRETTLALRHTNALFTIAFDGNTKMAVVKDVQKNPVKRIIEHVDFLEVKAGEKIDVEVPVFVEGTPKGAAVAFVDIQELKVRADVANLPEKIVVSVEGLTDGTKVFAKDVVLPEGVELDVEDPEESVVTVEVPEDASESTAAPEAAAPAADAAAPAADAK.

The segment at 168–206 (DPEESVVTVEVPEDASESTAAPEAAAPAADAAAPAADAK) is disordered. The span at 184 to 206 (ESTAAPEAAAPAADAAAPAADAK) shows a compositional bias: low complexity.

This sequence belongs to the bacterial ribosomal protein bL25 family. CTC subfamily. Part of the 50S ribosomal subunit; part of the 5S rRNA/L5/L18/L25 subcomplex. Contacts the 5S rRNA. Binds to the 5S rRNA independently of L5 and L18.

This is one of the proteins that binds to the 5S RNA in the ribosome where it forms part of the central protuberance. The chain is Large ribosomal subunit protein bL25 from Bifidobacterium longum (strain DJO10A).